A 257-amino-acid polypeptide reads, in one-letter code: UPF0246 protein BPP3440 (257 aa).

The protein belongs to the UPF0246 family.

This chain is UPF0246 protein BPP3440, found in Bordetella parapertussis (strain 12822 / ATCC BAA-587 / NCTC 13253).